The sequence spans 206 residues: Cytidylate kinase (206 aa).

7-15 (GPAASGKGT) contacts ATP.

It belongs to the cytidylate kinase family. Type 1 subfamily.

It localises to the cytoplasm. The enzyme catalyses CMP + ATP = CDP + ADP. It carries out the reaction dCMP + ATP = dCDP + ADP. In Azorhizobium caulinodans (strain ATCC 43989 / DSM 5975 / JCM 20966 / LMG 6465 / NBRC 14845 / NCIMB 13405 / ORS 571), this protein is Cytidylate kinase.